The chain runs to 340 residues: HPr kinase/phosphorylase (340 aa).

Catalysis depends on residues His153 and Lys174. Residue 168–175 (GRSGIGKS) participates in ATP binding. Residue Ser175 participates in Mg(2+) binding. Residue Asp192 is the Proton acceptor; for phosphorylation activity. Proton donor; for dephosphorylation activity of the active site. The important for the catalytic mechanism of both phosphorylation and dephosphorylation stretch occupies residues 216–225 (MEIRGLGIID). Glu217 contributes to the Mg(2+) binding site. Residue Arg258 is part of the active site. An important for the catalytic mechanism of dephosphorylation region spans residues 279–284 (PIYPGK).

This sequence belongs to the HPrK/P family. Homohexamer. Mg(2+) serves as cofactor.

It carries out the reaction [HPr protein]-L-serine + ATP = [HPr protein]-O-phospho-L-serine + ADP + H(+). It catalyses the reaction [HPr protein]-O-phospho-L-serine + phosphate + H(+) = [HPr protein]-L-serine + diphosphate. Catalyzes the ATP- as well as the pyrophosphate-dependent phosphorylation of a specific serine residue in HPr, a phosphocarrier protein of the phosphoenolpyruvate-dependent sugar phosphotransferase system (PTS). HprK/P also catalyzes the pyrophosphate-producing, inorganic phosphate-dependent dephosphorylation (phosphorolysis) of seryl-phosphorylated HPr (P-Ser-HPr). The sequence is that of HPr kinase/phosphorylase from Chloroherpeton thalassium (strain ATCC 35110 / GB-78).